The primary structure comprises 224 residues: Large ribosomal subunit protein uL4 (224 aa).

The tract at residues 53-74 is disordered; that stretch reads RNRSEVSHSTKKPFKQKGTGNA.

The protein belongs to the universal ribosomal protein uL4 family. As to quaternary structure, part of the 50S ribosomal subunit.

In terms of biological role, one of the primary rRNA binding proteins, this protein initially binds near the 5'-end of the 23S rRNA. It is important during the early stages of 50S assembly. It makes multiple contacts with different domains of the 23S rRNA in the assembled 50S subunit and ribosome. Its function is as follows. Forms part of the polypeptide exit tunnel. The sequence is that of Large ribosomal subunit protein uL4 from Chlamydia pneumoniae (Chlamydophila pneumoniae).